We begin with the raw amino-acid sequence, 250 residues long: Proteasome subunit alpha (250 aa).

This sequence belongs to the peptidase T1A family. The 20S proteasome core is composed of 14 alpha and 14 beta subunits that assemble into four stacked heptameric rings, resulting in a barrel-shaped structure. The two inner rings, each composed of seven catalytic beta subunits, are sandwiched by two outer rings, each composed of seven alpha subunits. The catalytic chamber with the active sites is on the inside of the barrel. Has a gated structure, the ends of the cylinder being occluded by the N-termini of the alpha-subunits. Is capped by the proteasome-associated ATPase, ARC.

It is found in the cytoplasm. It functions in the pathway protein degradation; proteasomal Pup-dependent pathway. The formation of the proteasomal ATPase ARC-20S proteasome complex, likely via the docking of the C-termini of ARC into the intersubunit pockets in the alpha-rings, may trigger opening of the gate for substrate entry. Interconversion between the open-gate and close-gate conformations leads to a dynamic regulation of the 20S proteasome proteolysis activity. Functionally, component of the proteasome core, a large protease complex with broad specificity involved in protein degradation. The protein is Proteasome subunit alpha of Mycobacterium sp. (strain JLS).